Reading from the N-terminus, the 386-residue chain is Probable protein phosphatase 2C 36 (386 aa).

Positions 60–363 constitute a PPM-type phosphatase domain; it reads ELSVAVVQGN…DDITVIVLFI (304 aa). 4 residues coordinate Mn(2+): D94, G95, D295, and D354.

It belongs to the PP2C family. Mg(2+) is required as a cofactor. Mn(2+) serves as cofactor.

It catalyses the reaction O-phospho-L-seryl-[protein] + H2O = L-seryl-[protein] + phosphate. The catalysed reaction is O-phospho-L-threonyl-[protein] + H2O = L-threonyl-[protein] + phosphate. In Oryza sativa subsp. japonica (Rice), this protein is Probable protein phosphatase 2C 36.